Reading from the N-terminus, the 692-residue chain is Elongation factor G (692 aa).

Residues 8–283 (NRIRNIGIAA…AVIDYLPAPT (276 aa)) form the tr-type G domain. GTP is bound by residues 17 to 24 (AHIDAGKT), 81 to 85 (DTPGH), and 135 to 138 (NKMD).

The protein belongs to the TRAFAC class translation factor GTPase superfamily. Classic translation factor GTPase family. EF-G/EF-2 subfamily.

It is found in the cytoplasm. Functionally, catalyzes the GTP-dependent ribosomal translocation step during translation elongation. During this step, the ribosome changes from the pre-translocational (PRE) to the post-translocational (POST) state as the newly formed A-site-bound peptidyl-tRNA and P-site-bound deacylated tRNA move to the P and E sites, respectively. Catalyzes the coordinated movement of the two tRNA molecules, the mRNA and conformational changes in the ribosome. This Helicobacter pylori (strain G27) protein is Elongation factor G.